A 78-amino-acid chain; its full sequence is Large ribosomal subunit protein bL28 (78 aa).

Belongs to the bacterial ribosomal protein bL28 family.

This Histophilus somni (strain 129Pt) (Haemophilus somnus) protein is Large ribosomal subunit protein bL28.